Reading from the N-terminus, the 441-residue chain is Serine carboxypeptidase-like 4 (441 aa).

An N-terminal signal peptide occupies residues 1–29; the sequence is MANNNVYSVLKSLLLLLHLVFLSKQHVDS. 3 cysteine pairs are disulfide-bonded: C88/C331, C252/C266, and C290/C297. The N-linked (GlcNAc...) asparagine glycan is linked to N109. S184 is a catalytic residue. N-linked (GlcNAc...) asparagine glycosylation is present at N350. Residue D366 is part of the active site. N-linked (GlcNAc...) asparagine glycosylation occurs at N382. The active site involves H419.

Belongs to the peptidase S10 family. Ubiquitous.

Its subcellular location is the secreted. Functionally, probable carboxypeptidase. This is Serine carboxypeptidase-like 4 (SCPL4) from Arabidopsis thaliana (Mouse-ear cress).